Reading from the N-terminus, the 316-residue chain is Lipoyl synthase (316 aa).

The segment covering 1–19 has biased composition (basic and acidic residues); the sequence is MRDLKIPEQRHPEKAHRPD. The tract at residues 1-31 is disordered; sequence MRDLKIPEQRHPEKAHRPDNAQPKKPSWIRV. Residues Cys55, Cys60, Cys66, Cys81, Cys85, Cys88, and Ser295 each coordinate [4Fe-4S] cluster. A Radical SAM core domain is found at 67–284; sequence WSQGHATMMI…EKAAYGKGFL (218 aa).

Belongs to the radical SAM superfamily. Lipoyl synthase family. [4Fe-4S] cluster is required as a cofactor.

It is found in the cytoplasm. It catalyses the reaction [[Fe-S] cluster scaffold protein carrying a second [4Fe-4S](2+) cluster] + N(6)-octanoyl-L-lysyl-[protein] + 2 oxidized [2Fe-2S]-[ferredoxin] + 2 S-adenosyl-L-methionine + 4 H(+) = [[Fe-S] cluster scaffold protein] + N(6)-[(R)-dihydrolipoyl]-L-lysyl-[protein] + 4 Fe(3+) + 2 hydrogen sulfide + 2 5'-deoxyadenosine + 2 L-methionine + 2 reduced [2Fe-2S]-[ferredoxin]. The protein operates within protein modification; protein lipoylation via endogenous pathway; protein N(6)-(lipoyl)lysine from octanoyl-[acyl-carrier-protein]: step 2/2. Functionally, catalyzes the radical-mediated insertion of two sulfur atoms into the C-6 and C-8 positions of the octanoyl moiety bound to the lipoyl domains of lipoate-dependent enzymes, thereby converting the octanoylated domains into lipoylated derivatives. This chain is Lipoyl synthase, found in Ruegeria sp. (strain TM1040) (Silicibacter sp.).